A 208-amino-acid polypeptide reads, in one-letter code: 3,4-dihydroxy-2-butanone 4-phosphate synthase (208 aa).

Thr3 carries the post-translational modification Phosphothreonine. Position 27 (Glu27) interacts with Mg(2+). Asp31 is a D-ribulose 5-phosphate binding site. An S-glutathionyl cysteine; by GRX2 modification is found at Cys56. D-ribulose 5-phosphate-binding positions include Thr88 and 145-149 (RRGHT). His148 is a binding site for Mg(2+).

Belongs to the DHBP synthase family. Homodimer. Mg(2+) is required as a cofactor. The cofactor is Mn(2+). Post-translationally, S-glutathionylation of Cys-56 is reversible and dependent on the cytoplasmic isoform of glutaredoxin-2.

The protein localises to the cytoplasm. Its subcellular location is the nucleus. The protein resides in the mitochondrion intermembrane space. It catalyses the reaction D-ribulose 5-phosphate = (2S)-2-hydroxy-3-oxobutyl phosphate + formate + H(+). It functions in the pathway cofactor biosynthesis; riboflavin biosynthesis; 2-hydroxy-3-oxobutyl phosphate from D-ribulose 5-phosphate: step 1/1. In terms of biological role, catalyzes the conversion of D-ribulose 5-phosphate to formate and 3,4-dihydroxy-2-butanone 4-phosphate. Also has an unrelated function in expression of mitochondrial respiration. The polypeptide is 3,4-dihydroxy-2-butanone 4-phosphate synthase (RIB3) (Saccharomyces cerevisiae (strain ATCC 204508 / S288c) (Baker's yeast)).